A 405-amino-acid chain; its full sequence is L-cysteine:1D-myo-inositol 2-amino-2-deoxy-alpha-D-glucopyranoside ligase (405 aa).

A Zn(2+)-binding site is contributed by C43. Residues 43–46, T58, and 81–83 contribute to the L-cysteinyl-5'-AMP site; these read CGIT and NIT. Positions 45 to 55 match the 'HIGH' region motif; that stretch reads ITPYDATHLGH. A 'ERGGDP' region motif is present at residues 187–192; it reads ERGGDP. W227 is an L-cysteinyl-5'-AMP binding site. Residue C231 participates in Zn(2+) binding. 249 to 251 provides a ligand contact to L-cysteinyl-5'-AMP; the sequence is GSD. H256 lines the Zn(2+) pocket. Residue I283 coordinates L-cysteinyl-5'-AMP. Residues 289–293 carry the 'KMSKS' region motif; that stretch reads KMSKS.

The protein belongs to the class-I aminoacyl-tRNA synthetase family. MshC subfamily. As to quaternary structure, monomer. Requires Zn(2+) as cofactor.

It catalyses the reaction 1D-myo-inositol 2-amino-2-deoxy-alpha-D-glucopyranoside + L-cysteine + ATP = 1D-myo-inositol 2-(L-cysteinylamino)-2-deoxy-alpha-D-glucopyranoside + AMP + diphosphate + H(+). Its function is as follows. Catalyzes the ATP-dependent condensation of GlcN-Ins and L-cysteine to form L-Cys-GlcN-Ins. This chain is L-cysteine:1D-myo-inositol 2-amino-2-deoxy-alpha-D-glucopyranoside ligase, found in Nakamurella multipartita (strain ATCC 700099 / DSM 44233 / CIP 104796 / JCM 9543 / NBRC 105858 / Y-104) (Microsphaera multipartita).